The following is a 333-amino-acid chain: Acetyl-coenzyme A carboxylase carboxyl transferase subunit alpha (333 aa).

A CoA carboxyltransferase C-terminal domain is found at 48–308 (ALEVKVETLR…KEMLIEELRI (261 aa)).

Belongs to the AccA family. In terms of assembly, acetyl-CoA carboxylase is a heterohexamer composed of biotin carboxyl carrier protein (AccB), biotin carboxylase (AccC) and two subunits each of ACCase subunit alpha (AccA) and ACCase subunit beta (AccD).

It is found in the cytoplasm. The catalysed reaction is N(6)-carboxybiotinyl-L-lysyl-[protein] + acetyl-CoA = N(6)-biotinyl-L-lysyl-[protein] + malonyl-CoA. It functions in the pathway lipid metabolism; malonyl-CoA biosynthesis; malonyl-CoA from acetyl-CoA: step 1/1. In terms of biological role, component of the acetyl coenzyme A carboxylase (ACC) complex. First, biotin carboxylase catalyzes the carboxylation of biotin on its carrier protein (BCCP) and then the CO(2) group is transferred by the carboxyltransferase to acetyl-CoA to form malonyl-CoA. This Chlorobium phaeobacteroides (strain DSM 266 / SMG 266 / 2430) protein is Acetyl-coenzyme A carboxylase carboxyl transferase subunit alpha.